The sequence spans 687 residues: Glycine--tRNA ligase beta subunit (687 aa).

The protein belongs to the class-II aminoacyl-tRNA synthetase family. As to quaternary structure, tetramer of two alpha and two beta subunits.

Its subcellular location is the cytoplasm. It catalyses the reaction tRNA(Gly) + glycine + ATP = glycyl-tRNA(Gly) + AMP + diphosphate. The sequence is that of Glycine--tRNA ligase beta subunit from Neisseria meningitidis serogroup B (strain ATCC BAA-335 / MC58).